Consider the following 559-residue polypeptide: Glucose-6-phosphate isomerase (559 aa).

Catalysis depends on glutamate 363, which acts as the Proton donor. Residues histidine 394 and lysine 523 contribute to the active site.

This sequence belongs to the GPI family.

It localises to the cytoplasm. It carries out the reaction alpha-D-glucose 6-phosphate = beta-D-fructose 6-phosphate. It functions in the pathway carbohydrate biosynthesis; gluconeogenesis. It participates in carbohydrate degradation; glycolysis; D-glyceraldehyde 3-phosphate and glycerone phosphate from D-glucose: step 2/4. Its function is as follows. Catalyzes the reversible isomerization of glucose-6-phosphate to fructose-6-phosphate. In Bartonella quintana (strain Toulouse) (Rochalimaea quintana), this protein is Glucose-6-phosphate isomerase.